The sequence spans 122 residues: Ribosome-binding factor A (122 aa).

This sequence belongs to the RbfA family. As to quaternary structure, monomer. Binds 30S ribosomal subunits, but not 50S ribosomal subunits or 70S ribosomes.

The protein localises to the cytoplasm. Its function is as follows. One of several proteins that assist in the late maturation steps of the functional core of the 30S ribosomal subunit. Associates with free 30S ribosomal subunits (but not with 30S subunits that are part of 70S ribosomes or polysomes). Required for efficient processing of 16S rRNA. May interact with the 5'-terminal helix region of 16S rRNA. The polypeptide is Ribosome-binding factor A (Prosthecochloris aestuarii (strain DSM 271 / SK 413)).